A 494-amino-acid chain; its full sequence is Glutamate--tRNA ligase (494 aa).

The short motif at 15-25 (PSPTGNPHVGL) is the 'HIGH' region element. Zn(2+)-binding residues include C112, C114, C139, and E141. The 'KMSKS' region signature appears at 260–264 (KLSKR). Residue K263 participates in ATP binding.

The protein belongs to the class-I aminoacyl-tRNA synthetase family. Glutamate--tRNA ligase type 1 subfamily. Monomer. Requires Zn(2+) as cofactor.

It localises to the cytoplasm. The enzyme catalyses tRNA(Glu) + L-glutamate + ATP = L-glutamyl-tRNA(Glu) + AMP + diphosphate. In terms of biological role, catalyzes the attachment of glutamate to tRNA(Glu) in a two-step reaction: glutamate is first activated by ATP to form Glu-AMP and then transferred to the acceptor end of tRNA(Glu). The polypeptide is Glutamate--tRNA ligase (Streptomyces coelicolor (strain ATCC BAA-471 / A3(2) / M145)).